We begin with the raw amino-acid sequence, 564 residues long: Arginine--tRNA ligase (564 aa).

The short motif at proline 124–histidine 134 is the 'HIGH' region element.

It belongs to the class-I aminoacyl-tRNA synthetase family. Monomer.

The protein localises to the cytoplasm. The enzyme catalyses tRNA(Arg) + L-arginine + ATP = L-arginyl-tRNA(Arg) + AMP + diphosphate. This chain is Arginine--tRNA ligase, found in Chlamydia caviae (strain ATCC VR-813 / DSM 19441 / 03DC25 / GPIC) (Chlamydophila caviae).